Reading from the N-terminus, the 391-residue chain is Elongation factor Tu (391 aa).

The tr-type G domain maps to 10 to 201; sequence KPHVNIGTIG…AVDDYIPTPA (192 aa). The interval 19 to 26 is G1; that stretch reads GHVDHGKT. 19–26 contacts GTP; that stretch reads GHVDHGKT. Threonine 26 contacts Mg(2+). A G2 region spans residues 55 to 59; it reads GITIS. A G3 region spans residues 76 to 79; that stretch reads DCPG. Residues 76 to 80 and 131 to 134 each bind GTP; these read DCPGH and NKVD. The G4 stretch occupies residues 131-134; the sequence is NKVD. Positions 169-171 are G5; it reads SAL.

It belongs to the TRAFAC class translation factor GTPase superfamily. Classic translation factor GTPase family. EF-Tu/EF-1A subfamily. In terms of assembly, monomer.

It is found in the cytoplasm. It catalyses the reaction GTP + H2O = GDP + phosphate + H(+). Functionally, GTP hydrolase that promotes the GTP-dependent binding of aminoacyl-tRNA to the A-site of ribosomes during protein biosynthesis. The sequence is that of Elongation factor Tu from Dinoroseobacter shibae (strain DSM 16493 / NCIMB 14021 / DFL 12).